The sequence spans 246 residues: Ribonuclease PH (246 aa).

Phosphate is bound by residues arginine 86 and 124-126 (GTR).

This sequence belongs to the RNase PH family. In terms of assembly, homohexameric ring arranged as a trimer of dimers.

The enzyme catalyses tRNA(n+1) + phosphate = tRNA(n) + a ribonucleoside 5'-diphosphate. Functionally, phosphorolytic 3'-5' exoribonuclease that plays an important role in tRNA 3'-end maturation. Removes nucleotide residues following the 3'-CCA terminus of tRNAs; can also add nucleotides to the ends of RNA molecules by using nucleoside diphosphates as substrates, but this may not be physiologically important. Probably plays a role in initiation of 16S rRNA degradation (leading to ribosome degradation) during starvation. This is Ribonuclease PH from Bacillus licheniformis (strain ATCC 14580 / DSM 13 / JCM 2505 / CCUG 7422 / NBRC 12200 / NCIMB 9375 / NCTC 10341 / NRRL NRS-1264 / Gibson 46).